A 239-amino-acid polypeptide reads, in one-letter code: MKQKSIEMLVQGASSLGITLEMFHVEHFQKFYSLLLEWNQKMNLTAITEEEEVVIKHFLDSLSVIKSGKIKGGEKVIDIGTGAGFPGIPLKIVFPEIGLTLLEASKKKVNFLNFLSQVLLFEGIEVIHGRAEELGKVERFREKFDIATARAVAPLNILLEYAVPFVRVGGHFIAMKGRDIEEVYQCKNALEELKCEIEDVIEVRLPFSDILHHLIVVKKVDVLPSKYPRREKAIRTKPL.

S-adenosyl-L-methionine-binding positions include glycine 80, phenylalanine 85, 103 to 105, 131 to 132, and arginine 150; these read EAS and AE.

This sequence belongs to the methyltransferase superfamily. RNA methyltransferase RsmG family.

Its subcellular location is the cytoplasm. Functionally, specifically methylates the N7 position of a guanine in 16S rRNA. The protein is Ribosomal RNA small subunit methyltransferase G of Caldanaerobacter subterraneus subsp. tengcongensis (strain DSM 15242 / JCM 11007 / NBRC 100824 / MB4) (Thermoanaerobacter tengcongensis).